The chain runs to 784 residues: Cation/H(+) antiporter 26 (784 aa).

The next 11 membrane-spanning stretches (helical) occupy residues 38-58 (PLLL…QALL), 61-81 (LANV…PSAL), 97-117 (YFII…ISTA), 130-150 (LAII…AIAC), 201-221 (LALS…LLLI), 240-260 (FTKV…FNWI), 286-306 (TFLS…LGLV), 321-341 (IGSF…GNKV), 351-371 (IISL…SIVL), 376-396 (FQVP…QGIY), and 413-433 (EAFG…TAIV).

This sequence belongs to the monovalent cation:proton antiporter 2 (CPA2) transporter (TC 2.A.37) family. CHX (TC 2.A.37.4) subfamily. In terms of tissue distribution, expressed in pollen.

The protein resides in the membrane. Its function is as follows. May operate as a cation/H(+) antiporter. This Arabidopsis thaliana (Mouse-ear cress) protein is Cation/H(+) antiporter 26 (CHX26).